The following is a 345-amino-acid chain: Uroporphyrinogen decarboxylase (345 aa).

Residues 30–34 (RQAGR), Asp79, Tyr154, Ser209, and His322 each bind substrate.

Belongs to the uroporphyrinogen decarboxylase family. In terms of assembly, homodimer.

Its subcellular location is the cytoplasm. It catalyses the reaction uroporphyrinogen III + 4 H(+) = coproporphyrinogen III + 4 CO2. The protein operates within porphyrin-containing compound metabolism; protoporphyrin-IX biosynthesis; coproporphyrinogen-III from 5-aminolevulinate: step 4/4. In terms of biological role, catalyzes the decarboxylation of four acetate groups of uroporphyrinogen-III to yield coproporphyrinogen-III. This is Uroporphyrinogen decarboxylase from Nocardioides sp. (strain ATCC BAA-499 / JS614).